Here is a 311-residue protein sequence, read N- to C-terminus: S-adenosyl-L-methionine-dependent tRNA 4-demethylwyosine synthase (311 aa).

C26, C39, C52, C62, C66, and C69 together coordinate [4Fe-4S] cluster. Residues 45-283 (YGIETHRCIQ…LKLAKMLDEN (239 aa)) form the Radical SAM core domain.

It belongs to the TYW1 family. As to quaternary structure, monomer. [4Fe-4S] cluster serves as cofactor.

The protein resides in the cytoplasm. The enzyme catalyses N(1)-methylguanosine(37) in tRNA(Phe) + pyruvate + S-adenosyl-L-methionine = 4-demethylwyosine(37) in tRNA(Phe) + 5'-deoxyadenosine + L-methionine + CO2 + H2O. Functionally, component of the wyosine derivatives biosynthesis pathway that catalyzes the condensation of N-methylguanine with 2 carbon atoms from pyruvate to form the tricyclic 4-demethylwyosine (imG-14) on guanosine-37 of tRNA(Phe). The chain is S-adenosyl-L-methionine-dependent tRNA 4-demethylwyosine synthase from Methanocaldococcus jannaschii (strain ATCC 43067 / DSM 2661 / JAL-1 / JCM 10045 / NBRC 100440) (Methanococcus jannaschii).